Reading from the N-terminus, the 237-residue chain is Uridylate kinase (237 aa).

Residue 12–15 (KLSG) participates in ATP binding. Residues 20–25 (GEDGLG) form an involved in allosteric activation by GTP region. Glycine 54 is a UMP binding site. Residues glycine 55 and arginine 59 each coordinate ATP. UMP contacts are provided by residues aspartate 74 and 135 to 142 (TGNPFFTT). Residues threonine 162, tyrosine 168, and aspartate 171 each coordinate ATP.

This sequence belongs to the UMP kinase family. In terms of assembly, homohexamer.

It is found in the cytoplasm. The enzyme catalyses UMP + ATP = UDP + ADP. The protein operates within pyrimidine metabolism; CTP biosynthesis via de novo pathway; UDP from UMP (UMPK route): step 1/1. Allosterically activated by GTP. Inhibited by UTP. Its function is as follows. Catalyzes the reversible phosphorylation of UMP to UDP. The sequence is that of Uridylate kinase (pyrH) from Haemophilus influenzae (strain ATCC 51907 / DSM 11121 / KW20 / Rd).